A 433-amino-acid chain; its full sequence is Glutamate-1-semialdehyde 2,1-aminomutase (433 aa).

N6-(pyridoxal phosphate)lysine is present on Lys-273.

The protein belongs to the class-III pyridoxal-phosphate-dependent aminotransferase family. HemL subfamily. In terms of assembly, homodimer. Pyridoxal 5'-phosphate is required as a cofactor.

It is found in the cytoplasm. The enzyme catalyses (S)-4-amino-5-oxopentanoate = 5-aminolevulinate. Its pathway is porphyrin-containing compound metabolism; protoporphyrin-IX biosynthesis; 5-aminolevulinate from L-glutamyl-tRNA(Glu): step 2/2. This Polynucleobacter necessarius subsp. necessarius (strain STIR1) protein is Glutamate-1-semialdehyde 2,1-aminomutase.